A 149-amino-acid chain; its full sequence is Transcriptional repressor NrdR (149 aa).

A zinc finger spans residues 3–34 (CPFCATDDTKVVDSRLTADGYQIRRRRECPVC). The region spanning 49–139 (PHIVKNNGSR…VYLSFDDVEE (91 aa)) is the ATP-cone domain.

It belongs to the NrdR family. The cofactor is Zn(2+).

Its function is as follows. Negatively regulates transcription of bacterial ribonucleotide reductase nrd genes and operons by binding to NrdR-boxes. This chain is Transcriptional repressor NrdR, found in Glaesserella parasuis serovar 5 (strain SH0165) (Haemophilus parasuis).